A 416-amino-acid polypeptide reads, in one-letter code: Gamma-glutamyl phosphate reductase (416 aa).

Belongs to the gamma-glutamyl phosphate reductase family.

The protein localises to the cytoplasm. The catalysed reaction is L-glutamate 5-semialdehyde + phosphate + NADP(+) = L-glutamyl 5-phosphate + NADPH + H(+). It participates in amino-acid biosynthesis; L-proline biosynthesis; L-glutamate 5-semialdehyde from L-glutamate: step 2/2. Its function is as follows. Catalyzes the NADPH-dependent reduction of L-glutamate 5-phosphate into L-glutamate 5-semialdehyde and phosphate. The product spontaneously undergoes cyclization to form 1-pyrroline-5-carboxylate. This chain is Gamma-glutamyl phosphate reductase, found in Streptococcus thermophilus.